The sequence spans 293 residues: 33 kDa chaperonin (293 aa).

2 disulfides stabilise this stretch: C237–C239 and C271–C274.

Belongs to the HSP33 family. Post-translationally, under oxidizing conditions two disulfide bonds are formed involving the reactive cysteines. Under reducing conditions zinc is bound to the reactive cysteines and the protein is inactive.

It is found in the cytoplasm. In terms of biological role, redox regulated molecular chaperone. Protects both thermally unfolding and oxidatively damaged proteins from irreversible aggregation. Plays an important role in the bacterial defense system toward oxidative stress. This is 33 kDa chaperonin from Haemophilus influenzae (strain ATCC 51907 / DSM 11121 / KW20 / Rd).